A 295-amino-acid chain; its full sequence is Nitrogenase iron protein (295 aa).

11–18 (GKGGIGKS) lines the ATP pocket. [4Fe-4S] cluster is bound at residue Cys-99. Position 102 is an ADP-ribosylarginine; by dinitrogenase reductase ADP-ribosyltransferase (Arg-102). [4Fe-4S] cluster is bound at residue Cys-133.

The protein belongs to the NifH/BchL/ChlL family. As to quaternary structure, homodimer. [4Fe-4S] cluster serves as cofactor. Post-translationally, the reversible ADP-ribosylation of Arg-102 inactivates the nitrogenase reductase and regulates nitrogenase activity.

The enzyme catalyses N2 + 8 reduced [2Fe-2S]-[ferredoxin] + 16 ATP + 16 H2O = H2 + 8 oxidized [2Fe-2S]-[ferredoxin] + 2 NH4(+) + 16 ADP + 16 phosphate + 6 H(+). The key enzymatic reactions in nitrogen fixation are catalyzed by the nitrogenase complex, which has 2 components: the iron protein and the molybdenum-iron protein. This Zymomonas mobilis subsp. mobilis (strain ATCC 31821 / ZM4 / CP4) protein is Nitrogenase iron protein.